A 227-amino-acid chain; its full sequence is Uracil-DNA glycosylase (227 aa).

Aspartate 64 serves as the catalytic Proton acceptor.

It belongs to the uracil-DNA glycosylase (UDG) superfamily. UNG family.

It is found in the cytoplasm. The enzyme catalyses Hydrolyzes single-stranded DNA or mismatched double-stranded DNA and polynucleotides, releasing free uracil.. In terms of biological role, excises uracil residues from the DNA which can arise as a result of misincorporation of dUMP residues by DNA polymerase or due to deamination of cytosine. The polypeptide is Uracil-DNA glycosylase (Sodalis glossinidius (strain morsitans)).